The chain runs to 403 residues: Acetate kinase (403 aa).

Asn7 contributes to the Mg(2+) binding site. Lys14 serves as a coordination point for ATP. Residue Arg90 participates in substrate binding. Asp147 (proton donor/acceptor) is an active-site residue. ATP is bound by residues 207 to 211 (HIGNG), 283 to 285 (DMR), and 331 to 335 (GVGEN). Residue Glu386 coordinates Mg(2+).

It belongs to the acetokinase family. In terms of assembly, homodimer. The cofactor is Mg(2+). Requires Mn(2+) as cofactor.

Its subcellular location is the cytoplasm. It carries out the reaction acetate + ATP = acetyl phosphate + ADP. It functions in the pathway metabolic intermediate biosynthesis; acetyl-CoA biosynthesis; acetyl-CoA from acetate: step 1/2. Catalyzes the formation of acetyl phosphate from acetate and ATP. Can also catalyze the reverse reaction. The sequence is that of Acetate kinase from Thermotoga sp. (strain RQ2).